The primary structure comprises 149 residues: Arginine repressor (149 aa).

The protein belongs to the ArgR family.

The protein resides in the cytoplasm. Its pathway is amino-acid biosynthesis; L-arginine biosynthesis [regulation]. Functionally, regulates arginine biosynthesis genes. The polypeptide is Arginine repressor (Halalkalibacterium halodurans (strain ATCC BAA-125 / DSM 18197 / FERM 7344 / JCM 9153 / C-125) (Bacillus halodurans)).